The primary structure comprises 448 residues: C4-dicarboxylate transport protein (448 aa).

The next 7 helical transmembrane spans lie at F22 to A42, L55 to M75, T90 to V110, E137 to V157, G159 to G179, L199 to I219, and W232 to V252. The segment at R428 to R448 is disordered. A compositionally biased stretch (pro residues) spans L432–A441.

The protein belongs to the dicarboxylate/amino acid:cation symporter (DAACS) (TC 2.A.23) family.

It is found in the cell inner membrane. Functionally, responsible for the transport of dicarboxylates such as succinate, fumarate, and malate from the periplasm across the membrane. This chain is C4-dicarboxylate transport protein, found in Xanthomonas campestris pv. campestris (strain 8004).